The following is a 56-amino-acid chain: Large ribosomal subunit protein bL32 (56 aa).

Positions 1–26 are disordered; the sequence is MAVQQNKKSRSKRGMRRSHDALSTAQ. A compositionally biased stretch (basic residues) spans 7 to 16; the sequence is KKSRSKRGMR.

It belongs to the bacterial ribosomal protein bL32 family.

This Shewanella baltica (strain OS155 / ATCC BAA-1091) protein is Large ribosomal subunit protein bL32.